We begin with the raw amino-acid sequence, 192 residues long: Adenylate kinase (192 aa).

10-15 (GAGKGT) serves as a coordination point for ATP. The NMP stretch occupies residues 30-59 (STGDMLREVIAKETEVGKKAKAIISSGALV). Residues Thr31, Arg36, 57–59 (ALV), 85–88 (GYPR), and Gln92 contribute to the AMP site. Residues 126-142 (RRVQETVAAGGQVRLDD) form an LID region. Position 127 (Arg127) interacts with ATP. Arg139 and Arg150 together coordinate AMP. Residue Ile178 coordinates ATP.

Belongs to the adenylate kinase family. As to quaternary structure, monomer.

The protein resides in the cytoplasm. The enzyme catalyses AMP + ATP = 2 ADP. The protein operates within purine metabolism; AMP biosynthesis via salvage pathway; AMP from ADP: step 1/1. In terms of biological role, catalyzes the reversible transfer of the terminal phosphate group between ATP and AMP. Plays an important role in cellular energy homeostasis and in adenine nucleotide metabolism. The polypeptide is Adenylate kinase (Bartonella tribocorum (strain CIP 105476 / IBS 506)).